A 59-amino-acid polypeptide reads, in one-letter code: Small ribosomal subunit protein eS30 (59 aa).

The tract at residues 1–35 (KVHGSLARAGKVRGQTPKVAKQEKKKKKTGRAKRR) is disordered. The segment covering 23-35 (EKKKKKTGRAKRR) has biased composition (basic residues). K51 carries the post-translational modification N6-succinyllysine.

Belongs to the eukaryotic ribosomal protein eS30 family.

The chain is Small ribosomal subunit protein eS30 (Fau) from Mus spicilegus (Steppe mouse).